Consider the following 219-residue polypeptide: Claudin-20 (219 aa).

Over 1 to 7 the chain is Cytoplasmic; it reads MASAGLQ. A helical membrane pass occupies residues 8-28; that stretch reads LLAFILALSGVSGVLTATLLP. The Extracellular portion of the chain corresponds to 29 to 81; sequence NWKVNVDVDSNIITAIVQLHGLWMDCTWYSTGMFSCALKHSILSLPIHVQAAR. Residues 82 to 102 traverse the membrane as a helical segment; sequence ATMVLACVLSALGICTSTVGM. The Cytoplasmic portion of the chain corresponds to 103–118; sequence KCTRLGGDRETKSHAS. A helical transmembrane segment spans residues 119-139; sequence FAGGVCFMSAGISSLISTVWY. Over 140–160 the chain is Extracellular; sequence TKEIIANFLDLTVPESNKHEP. Residues 161 to 181 form a helical membrane-spanning segment; sequence GGAIYIGFISAMLLFISGMIF. Residues 182–219 lie on the Cytoplasmic side of the membrane; that stretch reads CTSCIKRNPEARLDPPTQQPISNTQLENNSTHNLKDYV. Residues 193 to 219 form a disordered region; that stretch reads RLDPPTQQPISNTQLENNSTHNLKDYV. Residues 200–213 show a composition bias toward polar residues; sequence QPISNTQLENNSTH.

The protein belongs to the claudin family.

The protein localises to the cell junction. It is found in the tight junction. It localises to the cell membrane. Functionally, plays a major role in tight junction-specific obliteration of the intercellular space, through calcium-independent cell-adhesion activity. This chain is Claudin-20 (CLDN20), found in Homo sapiens (Human).